The primary structure comprises 350 residues: Flap endonuclease 1 (350 aa).

The N-domain stretch occupies residues 1 to 102; the sequence is MGVTELGKLI…IEIEKRRRVR (102 aa). Mg(2+) is bound by residues aspartate 31, aspartate 84, glutamate 156, glutamate 158, aspartate 177, aspartate 179, and aspartate 241. The I-domain stretch occupies residues 120-263; it reads EARKYAQRAL…RALRLIQEYG (144 aa).

This sequence belongs to the XPG/RAD2 endonuclease family. FEN1 subfamily. In terms of assembly, interacts with PCNA. PCNA stimulates the nuclease activity without altering cleavage specificity. Requires Mg(2+) as cofactor.

Structure-specific nuclease with 5'-flap endonuclease and 5'-3' exonuclease activities involved in DNA replication and repair. During DNA replication, cleaves the 5'-overhanging flap structure that is generated by displacement synthesis when DNA polymerase encounters the 5'-end of a downstream Okazaki fragment. Binds the unpaired 3'-DNA end and kinks the DNA to facilitate 5' cleavage specificity. Cleaves one nucleotide into the double-stranded DNA from the junction in flap DNA, leaving a nick for ligation. Also involved in the base excision repair (BER) pathway. Acts as a genome stabilization factor that prevents flaps from equilibrating into structures that lead to duplications and deletions. Also possesses 5'-3' exonuclease activity on nicked or gapped double-stranded DNA. This is Flap endonuclease 1 from Caldivirga maquilingensis (strain ATCC 700844 / DSM 13496 / JCM 10307 / IC-167).